The following is a 419-amino-acid chain: Multifunctional CCA protein (419 aa).

Residues Gly8 and Arg11 each coordinate ATP. Positions 8 and 11 each coordinate CTP. Mg(2+) contacts are provided by Asp21 and Asp23. ATP-binding residues include Arg91, Arg137, and Arg140. Residues Arg91, Arg137, and Arg140 each coordinate CTP. The 102-residue stretch at 226 to 327 (TGVHLMMVLD…VRLFDRCDAW (102 aa)) folds into the HD domain.

Belongs to the tRNA nucleotidyltransferase/poly(A) polymerase family. Bacterial CCA-adding enzyme type 1 subfamily. As to quaternary structure, monomer. Can also form homodimers and oligomers. Requires Mg(2+) as cofactor. It depends on Ni(2+) as a cofactor.

The catalysed reaction is a tRNA precursor + 2 CTP + ATP = a tRNA with a 3' CCA end + 3 diphosphate. The enzyme catalyses a tRNA with a 3' CCA end + 2 CTP + ATP = a tRNA with a 3' CCACCA end + 3 diphosphate. In terms of biological role, catalyzes the addition and repair of the essential 3'-terminal CCA sequence in tRNAs without using a nucleic acid template. Adds these three nucleotides in the order of C, C, and A to the tRNA nucleotide-73, using CTP and ATP as substrates and producing inorganic pyrophosphate. tRNA 3'-terminal CCA addition is required both for tRNA processing and repair. Also involved in tRNA surveillance by mediating tandem CCA addition to generate a CCACCA at the 3' terminus of unstable tRNAs. While stable tRNAs receive only 3'-terminal CCA, unstable tRNAs are marked with CCACCA and rapidly degraded. The polypeptide is Multifunctional CCA protein (Leptothrix cholodnii (strain ATCC 51168 / LMG 8142 / SP-6) (Leptothrix discophora (strain SP-6))).